The sequence spans 365 residues: Sulfate/thiosulfate import ATP-binding protein CysA (365 aa).

The ABC transporter domain maps to 3–237; it reads IEIANIKKSF…PATRFVLEFM (235 aa). 35–42 provides a ligand contact to ATP; it reads GPSGSGKT.

The protein belongs to the ABC transporter superfamily. Sulfate/tungstate importer (TC 3.A.1.6) family. The complex is composed of two ATP-binding proteins (CysA), two transmembrane proteins (CysT and CysW) and a solute-binding protein (CysP).

The protein localises to the cell inner membrane. It catalyses the reaction sulfate(out) + ATP + H2O = sulfate(in) + ADP + phosphate + H(+). It carries out the reaction thiosulfate(out) + ATP + H2O = thiosulfate(in) + ADP + phosphate + H(+). In terms of biological role, part of the ABC transporter complex CysAWTP involved in sulfate/thiosulfate import. Responsible for energy coupling to the transport system. The protein is Sulfate/thiosulfate import ATP-binding protein CysA of Shigella flexneri.